The following is a 483-amino-acid chain: GDP-fucose protein O-fucosyltransferase 3 (483 aa).

Residues 1–8 (MVRIPRRK) are Cytoplasmic-facing. Residues 9-31 (LLPSCLCMTATVFLMVTVQVLVE) traverse the membrane as a helical; Signal-anchor for type II membrane protein segment. Residues 32 to 483 (LGKFERKKFK…FWALVFKDSF (452 aa)) are Lumenal-facing. The disordered stretch occupies residues 45 to 64 (LQDGQKDVEGDPKHLNPLPK). N-linked (GlcNAc...) asparagine glycosylation is found at asparagine 110, asparagine 168, and asparagine 318. Cysteine 389 and cysteine 392 are oxidised to a cystine. The N-linked (GlcNAc...) asparagine glycan is linked to asparagine 468.

It belongs to the glycosyltransferase 10 family.

Its subcellular location is the endoplasmic reticulum membrane. The catalysed reaction is L-threonyl-[protein] + GDP-beta-L-fucose = 3-O-(alpha-L-fucosyl)-L-threonyl-[protein] + GDP + H(+). The enzyme catalyses L-seryl-[protein] + GDP-beta-L-fucose = 3-O-(alpha-L-fucosyl)-L-seryl-[protein] + GDP + H(+). Its pathway is protein modification; protein glycosylation. Its function is as follows. Protein O-fucosyltransferase that specifically catalyzes O-fucosylation of serine or threonine residues in EMI domains of target proteins, such as MMRN1, MMRN2 and EMID1. Attaches fucose through an O-glycosidic linkage. O-fucosylation of EMI domain-containing proteins may be required for facilitating protein folding and secretion. May also show alpha-(1,3)-fucosyltransferase activity toward the innermost N-acetyl glucosamine (GlcNAc) residue in biantennary N-glycan acceptors. However, this was tested with a library of synthetic substrates and this activity is unsure in vivo. May be involved in biosynthesis of Lewis X-carrying biantennary N-glycans that regulate neuron stem cell self-renewal during brain development. This Rattus norvegicus (Rat) protein is GDP-fucose protein O-fucosyltransferase 3 (Fut10).